A 225-amino-acid chain; its full sequence is Ethylene-responsive transcription factor 3 (225 aa).

Residues 1–12 (MRRGRAAAAPAP) are compositionally biased toward low complexity. 2 disordered regions span residues 1-29 (MRRG…IRFR) and 82-193 (NFPL…NIAS). The segment at residues 27 to 84 (RFRGVRKRPWGRFAAEIRDPWKKTRVWLGTFDSAEDAARAYDAAARALRGPKAKTNFP) is a DNA-binding region (AP2/ERF). Over residues 118-134 (SQRPTSSSMSSTVESFS) the composition is skewed to low complexity. Over residues 176-185 (DHGDCEKEND) the composition is skewed to basic and acidic residues. The EAR-like (transcriptional repression) motif lies at 202-208 (FDLNLPP).

The protein belongs to the ethylene-response factor family. Class 2 subfamily.

The protein resides in the nucleus. In terms of biological role, transcription factor that binds to the GCC-box pathogenesis-related promoter element. Involved in the regulation of gene expression by stress factors and by components of stress signal transduction pathways. Probably acts as a transcriptional repressor and may regulate other AtERFs. In Nicotiana tabacum (Common tobacco), this protein is Ethylene-responsive transcription factor 3 (ERF3).